The sequence spans 374 residues: Glutamate 5-kinase (374 aa).

Lys-9 lines the ATP pocket. Substrate-binding residues include Ser-49, Asp-136, and Asn-148. ATP is bound by residues 168–169 (TD) and 210–216 (TGGMRSK). Residues 276 to 354 (AGMITVDSGA…EEARQYSYLH (79 aa)) form the PUA domain.

Belongs to the glutamate 5-kinase family.

Its subcellular location is the cytoplasm. The enzyme catalyses L-glutamate + ATP = L-glutamyl 5-phosphate + ADP. The protein operates within amino-acid biosynthesis; L-proline biosynthesis; L-glutamate 5-semialdehyde from L-glutamate: step 1/2. Its function is as follows. Catalyzes the transfer of a phosphate group to glutamate to form L-glutamate 5-phosphate. In Geobacillus kaustophilus (strain HTA426), this protein is Glutamate 5-kinase.